Reading from the N-terminus, the 559-residue chain is Formate--tetrahydrofolate ligase (559 aa).

Position 68–75 (68–75 (TPAGEGKT)) interacts with ATP.

This sequence belongs to the formate--tetrahydrofolate ligase family.

It catalyses the reaction (6S)-5,6,7,8-tetrahydrofolate + formate + ATP = (6R)-10-formyltetrahydrofolate + ADP + phosphate. It functions in the pathway one-carbon metabolism; tetrahydrofolate interconversion. This chain is Formate--tetrahydrofolate ligase, found in Rhizobium rhizogenes (strain K84 / ATCC BAA-868) (Agrobacterium radiobacter).